We begin with the raw amino-acid sequence, 353 residues long: Photosystem II protein D1 (353 aa).

At Thr-2 the chain carries N-acetylthreonine. Position 2 is a phosphothreonine (Thr-2). 3 helical membrane passes run 29-46, 118-133, and 142-156; these read YIGW…TATS, HFFL…EWEL, and WIAV…AATA. Chlorophyll a is bound at residue His-118. Pheophytin a is bound at residue Tyr-126. The [CaMn4O5] cluster site is built by Asp-170 and Glu-189. Residues 197–218 form a helical membrane-spanning segment; sequence FHMLGVAGVFGGSLFSAMHGSL. Residue His-198 coordinates chlorophyll a. A quinone is bound by residues His-215 and 264-265; that span reads SF. His-215 is a Fe cation binding site. Fe cation is bound at residue His-272. Residues 274 to 288 form a helical membrane-spanning segment; sequence FLAAWPVVGIWFTAL. Residues His-332, Glu-333, Asp-342, and Ala-344 each contribute to the [CaMn4O5] cluster site. The propeptide occupies 345 to 353; sequence SVEAPSVNG.

The protein belongs to the reaction center PufL/M/PsbA/D family. In terms of assembly, PSII is composed of 1 copy each of membrane proteins PsbA, PsbB, PsbC, PsbD, PsbE, PsbF, PsbH, PsbI, PsbJ, PsbK, PsbL, PsbM, PsbT, PsbX, PsbY, PsbZ, Psb30/Ycf12, at least 3 peripheral proteins of the oxygen-evolving complex and a large number of cofactors. It forms dimeric complexes. The cofactor is The D1/D2 heterodimer binds P680, chlorophylls that are the primary electron donor of PSII, and subsequent electron acceptors. It shares a non-heme iron and each subunit binds pheophytin, quinone, additional chlorophylls, carotenoids and lipids. D1 provides most of the ligands for the Mn4-Ca-O5 cluster of the oxygen-evolving complex (OEC). There is also a Cl(-1) ion associated with D1 and D2, which is required for oxygen evolution. The PSII complex binds additional chlorophylls, carotenoids and specific lipids.. Post-translationally, tyr-161 forms a radical intermediate that is referred to as redox-active TyrZ, YZ or Y-Z. In terms of processing, C-terminally processed by CTPA; processing is essential to allow assembly of the oxygen-evolving complex and thus photosynthetic growth.

The protein resides in the plastid. Its subcellular location is the chloroplast thylakoid membrane. It catalyses the reaction 2 a plastoquinone + 4 hnu + 2 H2O = 2 a plastoquinol + O2. Functionally, photosystem II (PSII) is a light-driven water:plastoquinone oxidoreductase that uses light energy to abstract electrons from H(2)O, generating O(2) and a proton gradient subsequently used for ATP formation. It consists of a core antenna complex that captures photons, and an electron transfer chain that converts photonic excitation into a charge separation. The D1/D2 (PsbA/PsbD) reaction center heterodimer binds P680, the primary electron donor of PSII as well as several subsequent electron acceptors. The protein is Photosystem II protein D1 of Chaetosphaeridium globosum (Charophycean green alga).